A 189-amino-acid polypeptide reads, in one-letter code: RxLR effector protein CRE18 (189 aa).

The N-terminal stretch at Met-1–Ala-23 is a signal peptide. The RxLR-dEER motif lies at Arg-47 to Arg-68.

Belongs to the RxLR effector family.

It is found in the secreted. The protein localises to the host cytoplasm. It localises to the host nucleus. Effector that is involved in host plant infection. Contributes to virulence during the early infection stage, by inhibiting plant defense responses induced by both PAMP-triggered immunity (PTI) and effector-triggered immunity (ETI). The protein is RxLR effector protein CRE18 of Phytophthora infestans (strain T30-4) (Potato late blight agent).